The sequence spans 1018 residues: DNA polymerase gamma (1018 aa).

Belongs to the DNA polymerase type-A family. It depends on Mg(2+) as a cofactor.

The protein localises to the mitochondrion. It carries out the reaction DNA(n) + a 2'-deoxyribonucleoside 5'-triphosphate = DNA(n+1) + diphosphate. Functionally, involved in the replication of mitochondrial DNA. This chain is DNA polymerase gamma (mip1), found in Schizosaccharomyces pombe (strain 972 / ATCC 24843) (Fission yeast).